The sequence spans 202 residues: Imidazole glycerol phosphate synthase subunit HisH 2 (202 aa).

The Glutamine amidotransferase type-1 domain maps to 1–202; it reads MIVVIDYGVG…QLFKNFVELV (202 aa). C80 functions as the Nucleophile in the catalytic mechanism. Active-site residues include H183 and E185.

In terms of assembly, heterodimer of HisH and HisF.

It localises to the cytoplasm. It catalyses the reaction 5-[(5-phospho-1-deoxy-D-ribulos-1-ylimino)methylamino]-1-(5-phospho-beta-D-ribosyl)imidazole-4-carboxamide + L-glutamine = D-erythro-1-(imidazol-4-yl)glycerol 3-phosphate + 5-amino-1-(5-phospho-beta-D-ribosyl)imidazole-4-carboxamide + L-glutamate + H(+). The catalysed reaction is L-glutamine + H2O = L-glutamate + NH4(+). It functions in the pathway amino-acid biosynthesis; L-histidine biosynthesis; L-histidine from 5-phospho-alpha-D-ribose 1-diphosphate: step 5/9. Its function is as follows. IGPS catalyzes the conversion of PRFAR and glutamine to IGP, AICAR and glutamate. The HisH subunit catalyzes the hydrolysis of glutamine to glutamate and ammonia as part of the synthesis of IGP and AICAR. The resulting ammonia molecule is channeled to the active site of HisF. The protein is Imidazole glycerol phosphate synthase subunit HisH 2 (hisH2) of Pseudomonas aeruginosa (strain ATCC 15692 / DSM 22644 / CIP 104116 / JCM 14847 / LMG 12228 / 1C / PRS 101 / PAO1).